The chain runs to 338 residues: Cinnamoyl-CoA reductase 1 (338 aa).

NADP(+)-binding positions include 22 to 28 (GAGGFIG), Arg-47, Lys-53, 73 to 74 (DV), 93 to 95 (VAS), Tyr-165, Lys-169, 192 to 195 (PSMT), and Ser-207. Cys-158 and Cys-166 form a disulfide bridge. Catalysis depends on Lys-169, which acts as the Proton donor.

This sequence belongs to the NAD(P)-dependent epimerase/dehydratase family. Dihydroflavonol-4-reductase subfamily. Interacts with RAC1 in a GTP-dependent manner.

The protein resides in the cytoplasm. The catalysed reaction is (E)-cinnamaldehyde + NADP(+) + CoA = (E)-cinnamoyl-CoA + NADPH + H(+). Its pathway is aromatic compound metabolism; phenylpropanoid biosynthesis. Its activity is regulated as follows. Activated by the small GTPase RAC1. In terms of biological role, involved in the latter stages of lignin biosynthesis. Catalyzes one of the last steps of monolignol biosynthesis, the conversion of cinnamoyl-CoAs into their corresponding cinnamaldehydes. Probably involved in the formation of lignin in defense responses. This chain is Cinnamoyl-CoA reductase 1, found in Oryza sativa subsp. japonica (Rice).